A 775-amino-acid polypeptide reads, in one-letter code: Semaphorin-3E (775 aa).

Positions 1–25 (MASAGHIITLLLWGYLLELWTGGHT) are cleaved as a signal peptide. A Sema domain is found at 32–516 (RLRLSHKELL…SASAVAQVRF (485 aa)). A glycan (N-linked (GlcNAc...) asparagine) is linked at Asn44. A disulfide bond links Cys105 and Cys115. A glycan (N-linked (GlcNAc...) asparagine) is linked at Asn126. 4 disulfide bridges follow: Cys133/Cys142, Cys270/Cys382, Cys294/Cys342, and Cys519/Cys537. Asn330 carries N-linked (GlcNAc...) asparagine glycosylation. Residues 581-669 (ALDKTEEHLA…SFVHTVRKIT (89 aa)) form the Ig-like C2-type domain. N-linked (GlcNAc...) asparagine glycans are attached at residues Asn595 and Asn596. The cysteines at positions 654 and 729 are disulfide-linked. The disordered stretch occupies residues 742–775 (LKMSPSKWKYANPQEKKLRSKPEHYRLPRHTLDS). Residues 755–775 (QEKKLRSKPEHYRLPRHTLDS) are compositionally biased toward basic and acidic residues.

This sequence belongs to the semaphorin family. Interacts with PLXND1.

It localises to the secreted. Functionally, plays an important role in signaling via the cell surface receptor PLXND1. Mediates reorganization of the actin cytoskeleton, leading to the retraction of cell projections. Promotes focal adhesion disassembly and inhibits adhesion of endothelial cells to the extracellular matrix. Regulates angiogenesis, both during embryogenesis and after birth. Can down-regulate sprouting angiogenesis. Required for normal vascular patterning during embryogenesis. Plays an important role in ensuring the specificity of synapse formation. This Homo sapiens (Human) protein is Semaphorin-3E (SEMA3E).